Here is a 426-residue protein sequence, read N- to C-terminus: Glutamate-1-semialdehyde 2,1-aminomutase (426 aa).

Lys265 bears the N6-(pyridoxal phosphate)lysine mark.

It belongs to the class-III pyridoxal-phosphate-dependent aminotransferase family. HemL subfamily. Homodimer. The cofactor is pyridoxal 5'-phosphate.

Its subcellular location is the cytoplasm. The catalysed reaction is (S)-4-amino-5-oxopentanoate = 5-aminolevulinate. It participates in porphyrin-containing compound metabolism; protoporphyrin-IX biosynthesis; 5-aminolevulinate from L-glutamyl-tRNA(Glu): step 2/2. This chain is Glutamate-1-semialdehyde 2,1-aminomutase, found in Escherichia coli (strain K12 / DH10B).